The primary structure comprises 478 residues: Serine hydroxymethyltransferase (478 aa).

Residues L161 and 165-167 (GHL) each bind (6S)-5,6,7,8-tetrahydrofolate. Position 273 is an N6-(pyridoxal phosphate)lysine (K273). E291 contacts (6S)-5,6,7,8-tetrahydrofolate.

The protein belongs to the SHMT family. Homodimer. Requires pyridoxal 5'-phosphate as cofactor.

The protein localises to the cytoplasm. It catalyses the reaction (6R)-5,10-methylene-5,6,7,8-tetrahydrofolate + glycine + H2O = (6S)-5,6,7,8-tetrahydrofolate + L-serine. It functions in the pathway one-carbon metabolism; tetrahydrofolate interconversion. It participates in amino-acid biosynthesis; glycine biosynthesis; glycine from L-serine: step 1/1. Catalyzes the reversible interconversion of serine and glycine with tetrahydrofolate (THF) serving as the one-carbon carrier. This reaction serves as the major source of one-carbon groups required for the biosynthesis of purines, thymidylate, methionine, and other important biomolecules. Also exhibits THF-independent aldolase activity toward beta-hydroxyamino acids, producing glycine and aldehydes, via a retro-aldol mechanism. This Salinispora tropica (strain ATCC BAA-916 / DSM 44818 / JCM 13857 / NBRC 105044 / CNB-440) protein is Serine hydroxymethyltransferase.